We begin with the raw amino-acid sequence, 341 residues long: UDP-3-O-acylglucosamine N-acyltransferase (341 aa).

The active-site Proton acceptor is histidine 241.

It belongs to the transferase hexapeptide repeat family. LpxD subfamily. Homotrimer.

The enzyme catalyses a UDP-3-O-[(3R)-3-hydroxyacyl]-alpha-D-glucosamine + a (3R)-hydroxyacyl-[ACP] = a UDP-2-N,3-O-bis[(3R)-3-hydroxyacyl]-alpha-D-glucosamine + holo-[ACP] + H(+). It functions in the pathway bacterial outer membrane biogenesis; LPS lipid A biosynthesis. In terms of biological role, catalyzes the N-acylation of UDP-3-O-acylglucosamine using 3-hydroxyacyl-ACP as the acyl donor. Is involved in the biosynthesis of lipid A, a phosphorylated glycolipid that anchors the lipopolysaccharide to the outer membrane of the cell. The chain is UDP-3-O-acylglucosamine N-acyltransferase from Saccharophagus degradans (strain 2-40 / ATCC 43961 / DSM 17024).